The primary structure comprises 733 residues: Photosystem I P700 chlorophyll a apoprotein A2 (733 aa).

The next 8 membrane-spanning stretches (helical) occupy residues 46-69, 134-157, 174-198, 272-290, 329-352, 368-394, 416-438, and 516-534; these read IFAS…FHVA, LYLG…LHLQ, LNHH…HVAL, IAHH…GHMY, LHIQ…QHMY, AALY…IFFV, AIIS…LYIH, and FLVH…LILV. [4Fe-4S] cluster-binding residues include cysteine 558 and cysteine 567. A run of 2 helical transmembrane segments spans residues 574 to 595 and 642 to 664; these read AFYL…YWHW and LSVW…MFLI. Positions 653, 661, and 669 each coordinate chlorophyll a. Residue tryptophan 670 coordinates phylloquinone. A helical membrane pass occupies residues 706–726; it reads LVGLVHFAVGYILTYAAFVIA.

Belongs to the PsaA/PsaB family. As to quaternary structure, the PsaA/B heterodimer binds the P700 chlorophyll special pair and subsequent electron acceptors. PSI consists of a core antenna complex that captures photons, and an electron transfer chain that converts photonic excitation into a charge separation. The eukaryotic PSI reaction center is composed of at least 11 subunits. P700 is a chlorophyll a/chlorophyll a' dimer, A0 is one or more chlorophyll a, A1 is one or both phylloquinones and FX is a shared 4Fe-4S iron-sulfur center. serves as cofactor.

It is found in the plastid. It localises to the chloroplast thylakoid membrane. The catalysed reaction is reduced [plastocyanin] + hnu + oxidized [2Fe-2S]-[ferredoxin] = oxidized [plastocyanin] + reduced [2Fe-2S]-[ferredoxin]. Functionally, psaA and PsaB bind P700, the primary electron donor of photosystem I (PSI), as well as the electron acceptors A0, A1 and FX. PSI is a plastocyanin/cytochrome c6-ferredoxin oxidoreductase, converting photonic excitation into a charge separation, which transfers an electron from the donor P700 chlorophyll pair to the spectroscopically characterized acceptors A0, A1, FX, FA and FB in turn. Oxidized P700 is reduced on the lumenal side of the thylakoid membrane by plastocyanin or cytochrome c6. This Trieres chinensis (Marine centric diatom) protein is Photosystem I P700 chlorophyll a apoprotein A2.